Reading from the N-terminus, the 242-residue chain is Probable ergothioneine transport ATP-binding protein EgtUA (242 aa).

One can recognise an ABC transporter domain in the interval 2-236; it reads IEYKNVALRY…PATDFVADLF (235 aa). 34-41 is an ATP binding site; it reads GPSGSGKT.

The protein belongs to the ABC transporter superfamily. As to quaternary structure, the complex is probably composed of at least an ATP-binding protein (EgtUA) and a transmembrane protein (EgtUBC).

It is found in the cell inner membrane. The catalysed reaction is ergothioneine(out) + ATP + H2O = ergothioneine(in) + ADP + phosphate + H(+). Part of an ABC transporter complex EgtU required for the uptake of ergothioneine (EGT), a natural low-molecular weight (LMW) thiol antioxidant. Probably responsible for energy coupling to the transport system. This is Probable ergothioneine transport ATP-binding protein EgtUA from Streptococcus pneumoniae serotype 2 (strain D39 / NCTC 7466).